A 286-amino-acid chain; its full sequence is Beta-lactamase SHV-2 (286 aa).

Positions 1 to 21 are cleaved as a signal peptide; it reads MRYIRLCIISLLATLPLAVHA. The Acyl-ester intermediate role is filled by Ser66. Cys73 and Cys119 are oxidised to a cystine. Glu164 functions as the Proton acceptor in the catalytic mechanism. Residue 230–232 coordinates substrate; that stretch reads KTG.

The protein belongs to the class-A beta-lactamase family.

It catalyses the reaction a beta-lactam + H2O = a substituted beta-amino acid. In terms of biological role, this enzyme hydrolyzes cefotaxime, ceftazidime and other broad spectrum cephalosporins. This is Beta-lactamase SHV-2 (bla) from Klebsiella pneumoniae.